A 270-amino-acid chain; its full sequence is Small ribosomal subunit protein eS1 (270 aa).

2 disordered regions span residues 1 to 20 (MAVG…SKKK) and 238 to 270 (GGGK…QESV).

Belongs to the eukaryotic ribosomal protein eS1 family. As to quaternary structure, component of the small ribosomal subunit. Mature ribosomes consist of a small (40S) and a large (60S) subunit. The 40S subunit contains about 33 different proteins and 1 molecule of RNA (18S). The 60S subunit contains about 49 different proteins and 3 molecules of RNA (28S, 5.8S and 5S).

It is found in the cytoplasm. This chain is Small ribosomal subunit protein eS1, found in Culex quinquefasciatus (Southern house mosquito).